A 57-amino-acid polypeptide reads, in one-letter code: Potassium channel toxin alpha-KTx 23.3 (57 aa).

Residues 1–23 (MKMSIVIILLLFTCLIATNGASG) form the signal peptide. 4 cysteine pairs are disulfide-bonded: Cys-26/Cys-46, Cys-32/Cys-51, Cys-36/Cys-53, and Cys-41/Cys-56.

Belongs to the short scorpion toxin superfamily. Potassium channel inhibitor family. Alpha-KTx 23 subfamily. As to expression, expressed by the venom gland.

The protein localises to the secreted. Functionally, this toxin shows both immunosuppressive and anti-inflammatory activities. It has the potential to inhibit human T cell activation, since it reduces IL-2 secretion and the expression of T cell activation marker CD69 and acts as an anti-inflammatory agent, since it provokes the reduction of secretion of both IFN-gamma and TNF-alpha. In vivo, the delayed-type hypersensitivity response in rat autoimmune disease model is ameliorated in the presence of this toxin. Acts by blocking Kv1.3/KCNA3 potassium channels of T-lymphocytes. The sequence is that of Potassium channel toxin alpha-KTx 23.3 from Scorpiops tibetanus (Scorpion).